The chain runs to 266 residues: F-actin-capping protein subunit alpha (266 aa).

The protein belongs to the F-actin-capping protein alpha subunit family. Heterodimer of an alpha and a beta subunit.

The protein localises to the cytoplasm. The protein resides in the cytoskeleton. F-actin-capping proteins bind in a Ca(2+)-independent manner to the fast growing ends of actin filaments (barbed end) thereby blocking the exchange of subunits at these ends. Unlike other capping proteins (such as gelsolin and severin), these proteins do not sever actin filaments. This Debaryomyces hansenii (strain ATCC 36239 / CBS 767 / BCRC 21394 / JCM 1990 / NBRC 0083 / IGC 2968) (Yeast) protein is F-actin-capping protein subunit alpha (CAP1).